The following is a 328-amino-acid chain: Alanine racemase (328 aa).

Residue Lys33 is the Proton acceptor; specific for D-alanine of the active site. Lys33 carries the post-translational modification N6-(pyridoxal phosphate)lysine. Arg118 is a binding site for substrate. Tyr237 (proton acceptor; specific for L-alanine) is an active-site residue. Met283 is a substrate binding site.

Belongs to the alanine racemase family. Requires pyridoxal 5'-phosphate as cofactor.

It catalyses the reaction L-alanine = D-alanine. The protein operates within amino-acid biosynthesis; D-alanine biosynthesis; D-alanine from L-alanine: step 1/1. Catalyzes the interconversion of L-alanine and D-alanine. May also act on other amino acids. This Campylobacter jejuni subsp. jejuni serotype O:23/36 (strain 81-176) protein is Alanine racemase (alr).